The following is a 932-amino-acid chain: 2-oxoglutarate dehydrogenase E1 component (932 aa).

This sequence belongs to the alpha-ketoglutarate dehydrogenase family. In terms of assembly, homodimer. Part of the 2-oxoglutarate dehydrogenase (OGDH) complex composed of E1 (2-oxoglutarate dehydrogenase), E2 (dihydrolipoamide succinyltransferase) and E3 (dihydrolipoamide dehydrogenase); the complex contains multiple copies of the three enzymatic components (E1, E2 and E3). Thiamine diphosphate serves as cofactor.

It carries out the reaction N(6)-[(R)-lipoyl]-L-lysyl-[protein] + 2-oxoglutarate + H(+) = N(6)-[(R)-S(8)-succinyldihydrolipoyl]-L-lysyl-[protein] + CO2. Its function is as follows. E1 component of the 2-oxoglutarate dehydrogenase (OGDH) complex which catalyzes the decarboxylation of 2-oxoglutarate, the first step in the conversion of 2-oxoglutarate to succinyl-CoA and CO(2). This is 2-oxoglutarate dehydrogenase E1 component from Staphylococcus aureus (strain MW2).